We begin with the raw amino-acid sequence, 293 residues long: Ribosomal RNA small subunit methyltransferase A (293 aa).

The S-adenosyl-L-methionine site is built by Asn36, Leu38, Gly63, Glu84, Asp111, and Asn132.

Belongs to the class I-like SAM-binding methyltransferase superfamily. rRNA adenine N(6)-methyltransferase family. RsmA subfamily.

It is found in the cytoplasm. It carries out the reaction adenosine(1518)/adenosine(1519) in 16S rRNA + 4 S-adenosyl-L-methionine = N(6)-dimethyladenosine(1518)/N(6)-dimethyladenosine(1519) in 16S rRNA + 4 S-adenosyl-L-homocysteine + 4 H(+). Its function is as follows. Specifically dimethylates two adjacent adenosines (A1518 and A1519) in the loop of a conserved hairpin near the 3'-end of 16S rRNA in the 30S particle. May play a critical role in biogenesis of 30S subunits. The chain is Ribosomal RNA small subunit methyltransferase A from Treponema denticola (strain ATCC 35405 / DSM 14222 / CIP 103919 / JCM 8153 / KCTC 15104).